The sequence spans 427 residues: 3-phosphoshikimate 1-carboxyvinyltransferase (427 aa).

Lysine 20, serine 21, and arginine 25 together coordinate 3-phosphoshikimate. Lysine 20 provides a ligand contact to phosphoenolpyruvate. Phosphoenolpyruvate-binding residues include glycine 92 and arginine 120. Residues serine 166, glutamine 168, aspartate 312, and lysine 339 each contribute to the 3-phosphoshikimate site. Glutamine 168 contacts phosphoenolpyruvate. Residue aspartate 312 is the Proton acceptor of the active site. Phosphoenolpyruvate contacts are provided by arginine 343 and arginine 385.

Belongs to the EPSP synthase family. As to quaternary structure, monomer.

The protein localises to the cytoplasm. The catalysed reaction is 3-phosphoshikimate + phosphoenolpyruvate = 5-O-(1-carboxyvinyl)-3-phosphoshikimate + phosphate. It participates in metabolic intermediate biosynthesis; chorismate biosynthesis; chorismate from D-erythrose 4-phosphate and phosphoenolpyruvate: step 6/7. Functionally, catalyzes the transfer of the enolpyruvyl moiety of phosphoenolpyruvate (PEP) to the 5-hydroxyl of shikimate-3-phosphate (S3P) to produce enolpyruvyl shikimate-3-phosphate and inorganic phosphate. This is 3-phosphoshikimate 1-carboxyvinyltransferase from Streptococcus pneumoniae (strain Hungary19A-6).